Here is a 1041-residue protein sequence, read N- to C-terminus: FHIP family protein CG3558 (1041 aa).

Ser490 is modified (phosphoserine). Disordered regions lie at residues 619–648, 792–818, 858–879, 903–947, and 959–986; these read RPADEESEATDTTVATTASEADMDHNSSSL, KGNEGSPMHHSQQQQMVTNSGQQQGQL, SMFSRKSASTSTAPPNGSSASS, DGRG…SNSS, and SNTTTHSASTLHGLDGGPSTGGFNSEPA. Polar residues predominate over residues 628–637; sequence TDTTVATTAS. Ser797 is modified (phosphoserine). Polar residues predominate over residues 800–818; the sequence is HHSQQQQMVTNSGQQQGQL. Over residues 903–925 the composition is skewed to polar residues; the sequence is DGRGISQAQTSAGTCETSLSTQP. A compositionally biased stretch (low complexity) spans 927-947; it reads AGASRTGANATSTAASGSNSS. Over residues 959–968 the composition is skewed to polar residues; sequence SNTTTHSAST.

Belongs to the FHIP family.

This chain is FHIP family protein CG3558, found in Drosophila melanogaster (Fruit fly).